Here is a 137-residue protein sequence, read N- to C-terminus: UBAP1-MVB12-associated (UMA)-domain containing protein 1 (137 aa).

The segment at M1–A72 is disordered. The span at D32 to D44 shows a compositional bias: basic and acidic residues. Residues P50–V63 show a composition bias toward polar residues. Residues L86–L134 enclose the UMA domain.

The chain is UBAP1-MVB12-associated (UMA)-domain containing protein 1 from Homo sapiens (Human).